A 1132-amino-acid polypeptide reads, in one-letter code: Rho GTPase-activating protein gacE (1132 aa).

Positions 76–262 (LEMNKILKSE…FLISNYLNVF (187 aa)) constitute a Rho-GAP domain. Disordered regions lie at residues 279 to 354 (NELL…SSPI) and 472 to 517 (NSTT…SLIN). The span at 281–301 (LLNNNNNNNNVIMPTTTTTTT) shows a compositional bias: low complexity. Over residues 302–311 (SASSSILPTD) the composition is skewed to polar residues. Composition is skewed to low complexity over residues 328–354 (SIPL…SSPI), 473–498 (STTT…STTT), and 507–517 (SNSASNNSLIN).

The protein resides in the cytoplasm. Functionally, rho GTPase-activating protein involved in the signal transduction pathway. This chain is Rho GTPase-activating protein gacE (gacE), found in Dictyostelium discoideum (Social amoeba).